A 369-amino-acid polypeptide reads, in one-letter code: 3-dehydroquinate synthase (369 aa).

NAD(+)-binding positions include 75–80, 109–113, 133–134, lysine 146, lysine 155, and 173–176; these read DGEEHK, GVIGD, TT, and TLKT. The Zn(2+) site is built by glutamate 188, histidine 251, and histidine 268.

It belongs to the sugar phosphate cyclases superfamily. Dehydroquinate synthase family. Requires Co(2+) as cofactor. Zn(2+) is required as a cofactor. NAD(+) serves as cofactor.

Its subcellular location is the cytoplasm. It carries out the reaction 7-phospho-2-dehydro-3-deoxy-D-arabino-heptonate = 3-dehydroquinate + phosphate. It functions in the pathway metabolic intermediate biosynthesis; chorismate biosynthesis; chorismate from D-erythrose 4-phosphate and phosphoenolpyruvate: step 2/7. Catalyzes the conversion of 3-deoxy-D-arabino-heptulosonate 7-phosphate (DAHP) to dehydroquinate (DHQ). The sequence is that of 3-dehydroquinate synthase from Legionella pneumophila (strain Lens).